Consider the following 515-residue polypeptide: 2,3-bisphosphoglycerate-independent phosphoglycerate mutase 1 (515 aa).

2 residues coordinate Mn(2+): Asp-14 and Ser-64. The Phosphoserine intermediate role is filled by Ser-64. Substrate is bound by residues His-125, 155-156 (RD), Arg-187, Arg-193, 264-267 (RADR), and Lys-337. Mn(2+)-binding residues include Asp-404, His-408, Asp-445, His-446, and His-464.

This sequence belongs to the BPG-independent phosphoglycerate mutase family. It depends on Mn(2+) as a cofactor.

It catalyses the reaction (2R)-2-phosphoglycerate = (2R)-3-phosphoglycerate. Its pathway is carbohydrate degradation; glycolysis; pyruvate from D-glyceraldehyde 3-phosphate: step 3/5. Catalyzes the interconversion of 2-phosphoglycerate and 3-phosphoglycerate. The protein is 2,3-bisphosphoglycerate-independent phosphoglycerate mutase 1 of Methanosarcina acetivorans (strain ATCC 35395 / DSM 2834 / JCM 12185 / C2A).